The primary structure comprises 300 residues: NAD kinase (300 aa).

Asp80 acts as the Proton acceptor in catalysis. Residues 80-81, 154-155, Arg165, Arg182, Asp184, 195-200, and Gln253 each bind NAD(+); these read DG, ND, and TAYALS.

It belongs to the NAD kinase family. A divalent metal cation serves as cofactor.

It localises to the cytoplasm. The catalysed reaction is NAD(+) + ATP = ADP + NADP(+) + H(+). Its function is as follows. Involved in the regulation of the intracellular balance of NAD and NADP, and is a key enzyme in the biosynthesis of NADP. Catalyzes specifically the phosphorylation on 2'-hydroxyl of the adenosine moiety of NAD to yield NADP. The chain is NAD kinase from Aromatoleum aromaticum (strain DSM 19018 / LMG 30748 / EbN1) (Azoarcus sp. (strain EbN1)).